The sequence spans 932 residues: Chaperone protein ClpC3, chloroplastic (932 aa).

The tract at residues 1 to 20 (MERTLLNPPPSLRSPACRTT) is disordered. The transit peptide at 1–48 (MERTLLNPPPSLRSPACRTTTATRIRPSSSMATMIPTPPPMRHARLVK) directs the protein to the chloroplast. Residues 99–240 (FDMFTDKAIK…RSEVIRMISD (142 aa)) form the Clp R domain. 2 repeat regions span residues 102–167 (FTDK…AGRG) and 177–240 (FTPA…MISD). The interval 264 to 511 (LLEYGTNLTK…LVRLRNAQLP (248 aa)) is i. Residue 309-316 (GEPGVGKT) participates in ATP binding. Positions 518 to 553 (EKKLKKIMAEKSEAIRSQDFEKAGALRGEEVELKSE) constitute a UVR domain. The tract at residues 579–770 (VTEADVQHIV…LIIMTSNVGS (192 aa)) is II. Position 653 to 660 (653 to 660 (GPTGVGKS)) interacts with ATP.

It belongs to the ClpA/ClpB family. ClpC subfamily.

It localises to the plastid. It is found in the chloroplast. Molecular chaperone that may interact with a ClpP-like protease involved in degradation of denatured proteins in the chloroplast. The sequence is that of Chaperone protein ClpC3, chloroplastic (CLPC3) from Oryza sativa subsp. japonica (Rice).